The following is a 206-amino-acid chain: 2-phospho-L-lactate guanylyltransferase (206 aa).

The protein belongs to the CofC family. As to quaternary structure, homodimer.

The catalysed reaction is (2S)-2-phospholactate + GTP + H(+) = (2S)-lactyl-2-diphospho-5'-guanosine + diphosphate. It participates in cofactor biosynthesis; coenzyme F420 biosynthesis. Guanylyltransferase that catalyzes the activation of (2S)-2-phospholactate (2-PL) as (2S)-lactyl-2-diphospho-5'-guanosine, via the condensation of 2-PL with GTP. It is involved in the biosynthesis of coenzyme F420, a hydride carrier cofactor. This chain is 2-phospho-L-lactate guanylyltransferase, found in Haloferax volcanii (strain ATCC 29605 / DSM 3757 / JCM 8879 / NBRC 14742 / NCIMB 2012 / VKM B-1768 / DS2) (Halobacterium volcanii).